A 390-amino-acid chain; its full sequence is ATP-sensitive inward rectifier potassium channel 11 (390 aa).

Over 1–65 (MLSRKGIIPE…LQDVFTTLVD (65 aa)) the chain is Cytoplasmic. ATP contacts are provided by N48 and R50. The chain crosses the membrane as a helical span at residues 66-92 (LKWPHTLLIFTMSFLCSWLLFAMAWWL). At 93–116 (IAFAHGDLAPSEGTAEPCVTSIHS) the chain is on the extracellular side. C110 and C142 are disulfide-bonded. Residues 117–133 (FSSAFLFSIEVQVTIGF) constitute an intramembrane region (discontinuously helical; Pore-forming). T130 and F133 together coordinate K(+). The Selectivity filter signature appears at 130-135 (TIGFGG). At 134 to 142 (GGRMVTEEC) the chain is on the extracellular side. The chain crosses the membrane as a helical span at residues 143-171 (PLAILILIVQNIVGLMINAIMLGCIFMKT). Residues 172-390 (AQAHRRAETL…KFSISPDSLS (219 aa)) are Cytoplasmic-facing. R176 provides a ligand contact to a 1,2-diacyl-sn-glycero-3-phospho-(1D-myo-inositol-4,5-bisphosphate). Y330 is a binding site for ATP. T341 carries the post-translational modification Phosphothreonine; by MAPK1. Residue S385 is modified to Phosphoserine; by MAPK1.

Belongs to the inward rectifier-type potassium channel (TC 1.A.2.1) family. KCNJ11 subfamily. Homotetramer; the homotetramer binds four ATP molecules (one ATP per subunit). Forms an heterooctamer with ABCC8/SUR1; one KCNJ11 homotetramer interacts with four ABCC8/SUR1 molecules. Interacts with ABCC9/SUR2. Post-translationally, phosphorylation by MAPK1 results in changes in channel gating that destabilize the closed states and reduce the ATP sensitivity.

Its subcellular location is the membrane. It catalyses the reaction K(+)(in) = K(+)(out). Its activity is regulated as follows. KATP channels are regulated by cytoplasmic ATP/ADP ratios; ATP inhibits the channel by closing the pore, while ADP activates the channel. Activated by phosphatidylinositol 4,5-biphosphate (PtdIns(4,5)P2). Functionally, inward rectifier potassium channel that forms the pore of ATP-sensitive potassium channels (KATP), regulating potassium permeability as a function of cytoplasmic ATP and ADP concentrations in many different cells. Inward rectifier potassium channels are characterized by a greater tendency to allow potassium to flow into the cell rather than out of it. Their voltage dependence is regulated by the concentration of extracellular potassium; as external potassium is raised, the voltage range of the channel opening shifts to more positive voltages. The inward rectification is mainly due to the blockage of outward current by internal magnesium. Can be blocked by extracellular barium. In pancreatic cells, it forms KATP channels with ABCC8/SUR1. Can form cardiac and smooth muscle-type KATP channels with ABCC9. The chain is ATP-sensitive inward rectifier potassium channel 11 (KCNJ11) from Homo sapiens (Human).